Here is a 548-residue protein sequence, read N- to C-terminus: Ran-binding protein 9 (548 aa).

Over residues 1 to 14 (MSSPPLHGLSSGGH) the composition is skewed to low complexity. Positions 1-26 (MSSPPLHGLSSGGHLSRDPPPRSWSP) are disordered. Residues 2 to 189 (SSPPLHGLSS…VDANFGQSPF (188 aa)) form the B30.2/SPRY domain. Positions 15–26 (LSRDPPPRSWSP) are enriched in basic and acidic residues. A LisH domain is found at 217 to 249 (WQSMIQRMVSSYLVHHGYCSTAEAFAKSTDQTV). The CTLH domain maps to 255–312 (SIKNRQRIQKLVLSGRMGEAIETTQQLYPSLLERNPNLLFTLKVRQFIEMVNGTDSEV).

This sequence belongs to the RANBP9/10 family. In terms of assembly, identified in the CTLH complex that contains at least MAEA, RMND5A (or alternatively its paralog RMND5B), GID8, WDR26, and RANBP9 and/or RANBP10.

Its subcellular location is the cytoplasm. The protein localises to the cell membrane. It is found in the nucleus. May act as scaffolding protein, and as adapter protein to couple membrane receptors to intracellular signaling pathways. Acts as a mediator of cell spreading and actin cytoskeleton rearrangement. Core component of the CTLH E3 ubiquitin-protein ligase complex that mediates ubiquitination and subsequent proteasomal degradation of target proteins. The sequence is that of Ran-binding protein 9 (ranbp9) from Xenopus tropicalis (Western clawed frog).